The primary structure comprises 197 residues: uncharacterized protein (197 aa).

The span at 168 to 185 shows a compositional bias: basic and acidic residues; that stretch reads QRDDFSEDSHANDPKLVG. The tract at residues 168–197 is disordered; the sequence is QRDDFSEDSHANDPKLVGDDYVPQAPEQIN.

This is an uncharacterized protein from Escherichia coli (strain K12).